The following is a 280-amino-acid chain: Chaperone protein DnaJ 2 (280 aa).

Residues 6 to 70 (DYYAILGVPR…EKRRIYDTYG (65 aa)) enclose the J domain.

This sequence belongs to the DnaJ family. In terms of assembly, forms a heterononamer with DnaJ and DafA in the resting state. Three copies of each protein are present in the complex.

The protein localises to the cytoplasm. Does not influence ATP binding or hydrolysis nor ADP release. Exerts influence on the interaction of DnaK with substrates; in the presence of DafA, DnaJ inhibits substrate binding, and substrate already bound to DnaK is displaced by DnaJ and DafA. This Thermus thermophilus (strain ATCC 27634 / DSM 579 / HB8) protein is Chaperone protein DnaJ 2 (dnaJ2).